We begin with the raw amino-acid sequence, 918 residues long: Glutamate receptor ionotropic, kainate 1 (918 aa).

An N-terminal signal peptide occupies residues 1 to 30 (MEHGTLLAQPGLWTRDTSWALLYFLCYILP). The Extracellular portion of the chain corresponds to 31-576 (QTAPQVLRIG…VFSFLNPLSP (546 aa)). Asn-68, Asn-74, Asn-276, Asn-379, Asn-428, Asn-439, and Asn-446 each carry an N-linked (GlcNAc...) asparagine glycan. L-glutamate is bound by residues Pro-531, Thr-533, and Arg-538. The N-linked (GlcNAc...) asparagine glycan is linked to Asn-561. A helical membrane pass occupies residues 577–597 (DIWMYVLLACLGVSCVLFVIA). The Cytoplasmic segment spans residues 598 to 653 (RFTPYEWYNPHPCNPDSDVVENNFTLLNSFWFGVGALMQQGSELMPKALSTRIVGG). The helical transmembrane segment at 654 to 674 (IWWFFTLIIISSYTANLAAFL) threads the bilayer. The Extracellular segment spans residues 675–834 (TVERMESPID…KEASALGVEN (160 aa)). L-glutamate contacts are provided by Ser-704 and Thr-705. Ser-725 is modified (phosphoserine; by PKC). An L-glutamate-binding site is contributed by Glu-753. Thr-761 is modified (phosphothreonine; by PKC). Cysteines 765 and 819 form a disulfide. An N-linked (GlcNAc...) asparagine glycan is attached at Asn-766. A helical transmembrane segment spans residues 835-855 (IGGIFIVLAAGLVLSVFVAIG). The Cytoplasmic portion of the chain corresponds to 856–918 (EFIYKSRKNN…IRKQSSVHTV (63 aa)).

The protein belongs to the glutamate-gated ion channel (TC 1.A.10.1) family. GRIK1 subfamily. As to quaternary structure, homotetramer or heterotetramer of pore-forming glutamate receptor subunits. Tetramers may be formed by the dimerization of dimers. Can form functional heteromeric receptors with GRIK5. Can form functional heteromeric receptors with GRIK4. Interacts with KLHL17.

The protein localises to the cell membrane. It is found in the postsynaptic cell membrane. It carries out the reaction Ca(2+)(in) = Ca(2+)(out). Functionally, ionotropic glutamate receptor that functions as a cation-permeable ligand-gated ion channel, gated by L-glutamate and the glutamatergic agonist kainic acid. L-glutamate acts as an excitatory neurotransmitter at many synapses in the central nervous system. Binding of the excitatory neurotransmitter L-glutamate induces a conformation change, leading to the opening of the cation channel, and thereby converts the chemical signal to an electrical impulse. The receptor then desensitizes rapidly and enters a transient inactive state, characterized by the presence of bound agonist. Its function is as follows. Ionotropic glutamate receptor that functions as a cation-permeable ligand-gated ion channel, gated by L-glutamate and the glutamatergic agonist kainic acid. The polypeptide is Glutamate receptor ionotropic, kainate 1 (GRIK1) (Homo sapiens (Human)).